A 394-amino-acid chain; its full sequence is Elongation factor Tu 2 (394 aa).

The 195-residue stretch at 10 to 204 folds into the tr-type G domain; sequence KPHVNVGTIG…ALDSYIPEPE (195 aa). A G1 region spans residues 19–26; it reads GHVDHGKT. Position 19 to 26 (19 to 26) interacts with GTP; sequence GHVDHGKT. Position 26 (Thr-26) interacts with Mg(2+). The segment at 60 to 64 is G2; that stretch reads GITIN. The tract at residues 81–84 is G3; it reads DCPG. GTP contacts are provided by residues 81-85 and 136-139; these read DCPGH and NKCD. The segment at 136–139 is G4; that stretch reads NKCD. The tract at residues 174–176 is G5; the sequence is SAL.

It belongs to the TRAFAC class translation factor GTPase superfamily. Classic translation factor GTPase family. EF-Tu/EF-1A subfamily. Monomer.

The protein localises to the cytoplasm. The catalysed reaction is GTP + H2O = GDP + phosphate + H(+). Functionally, GTP hydrolase that promotes the GTP-dependent binding of aminoacyl-tRNA to the A-site of ribosomes during protein biosynthesis. This Shewanella oneidensis (strain ATCC 700550 / JCM 31522 / CIP 106686 / LMG 19005 / NCIMB 14063 / MR-1) protein is Elongation factor Tu 2.